The following is a 271-amino-acid chain: Aquaporin-11 (271 aa).

Residues 1 to 14 lie on the Cytoplasmic side of the membrane; it reads MSPLLGLRSELQDT. Residues 15–35 traverse the membrane as a helical segment; sequence CTSLGLMLSVVLLMGLARVVA. At 36 to 41 the chain is on the lumenal side; it reads RQQLHR. Residues 42–62 form a helical membrane-spanning segment; sequence PVAHAFVLEFLATFQLCCCTH. Over 63-74 the chain is Cytoplasmic; that stretch reads ELQLLSEQHPAH. The chain crosses the membrane as a helical span at residues 75–95; the sequence is PTWTLTLVYFFSLVHGLTLVG. Residues 96–163 are Lumenal-facing; that stretch reads TSSNPCGVMM…ACKNPIRVDL (68 aa). An NPC motif is present at residues 99-101; that stretch reads NPC. A helical transmembrane segment spans residues 164 to 184; sequence LKAVITEAVCSFLFHSALLHF. Topologically, residues 185–194 are cytoplasmic; sequence QEVRTKLRIH. Residues 195 to 215 traverse the membrane as a helical segment; that stretch reads LLAALITFLVYAGGSLTGAVF. The NPA signature appears at 216-218; it reads NPA. Residues 216-234 are Lumenal-facing; the sequence is NPALALSLHFMCFDEAFPQ. The helical transmembrane segment at 235–255 threads the bilayer; it reads FFIVYWLAPSLGILLMILMFS. Residues 256–271 are Cytoplasmic-facing; sequence FFLPWLHNNHTINKKE.

This sequence belongs to the MIP/aquaporin (TC 1.A.8) family. AQP11/AQP12 subfamily. In terms of assembly, homodimer; disulfide-linked. Homotetramer. Can also form homomultimer. Post-translationally, not glycosylated. As to expression, detected in the sperm head and tail (at protein level). Expressed in subcutaneous adipocytes. Expressed in testis, kidney and ejaculated spermatozoa.

Its subcellular location is the endoplasmic reticulum membrane. It localises to the cytoplasmic vesicle membrane. The protein localises to the cell membrane. The enzyme catalyses H2O(in) = H2O(out). It carries out the reaction glycerol(in) = glycerol(out). It catalyses the reaction H2O2(out) = H2O2(in). Its function is as follows. Channel protein that facilitates the transport of water, glycerol and hydrogen peroxide across membrane of cell or organelles guaranteeing intracellular homeostasis in several organes like liver, kidney and brain. In situation of stress, participates in endoplasmic reticulum (ER) homeostasis by regulating redox homeostasis through the transport of hydrogen peroxide across the endoplasmic reticulum membrane thereby regulating the oxidative stress through the NADPH oxidase 2 pathway. Plays a role by maintaining an environment suitable for translation or protein foldings in the ER lumen namely by participating in the PKD1 glycosylation processing resulting in regulation of PKD1 membrane trafficking thereby preventing the accumulation of unfolding protein in ER. Plays a role in the proximal tubule function by regulating its endosomal acidification. May play a role in postnatal kidney development. This Homo sapiens (Human) protein is Aquaporin-11.